We begin with the raw amino-acid sequence, 127 residues long: Large ribosomal subunit protein bL12 (127 aa).

Residues 94–114 (VDGAPSTLKEAASKEEAEEAK) are disordered. Positions 104–114 (AASKEEAEEAK) are enriched in basic and acidic residues.

It belongs to the bacterial ribosomal protein bL12 family. As to quaternary structure, homodimer. Part of the ribosomal stalk of the 50S ribosomal subunit. Forms a multimeric L10(L12)X complex, where L10 forms an elongated spine to which 2 to 4 L12 dimers bind in a sequential fashion. Binds GTP-bound translation factors.

Its function is as follows. Forms part of the ribosomal stalk which helps the ribosome interact with GTP-bound translation factors. Is thus essential for accurate translation. The sequence is that of Large ribosomal subunit protein bL12 from Nitratidesulfovibrio vulgaris (strain ATCC 29579 / DSM 644 / CCUG 34227 / NCIMB 8303 / VKM B-1760 / Hildenborough) (Desulfovibrio vulgaris).